Reading from the N-terminus, the 1642-residue chain is DNA-directed RNA polymerase I subunit RPA1 (1642 aa).

Residues C66, C69, C75, and H78 each contribute to the Zn(2+) site. Mg(2+) is bound by residues D565, D567, and D569. The segment at 939–951 is bridging helix; it reads PQDFFFHCMAGRE. Residues 1337–1428 are disordered; it reads DADKDDDNDL…GNDNDGDDKA (92 aa). Acidic residues predominate over residues 1340-1350; that stretch reads KDDDNDLDNGD. The segment covering 1351–1361 has biased composition (basic and acidic residues); sequence EVGRSKAKAND. Composition is skewed to acidic residues over residues 1362-1373 and 1386-1424; these read DDSSDDNDDDDA and KDYDDPDDVEELHDANDDDDEAEDEDDEEKGQDGNDNDG. 2 positions are modified to phosphoserine: S1364 and S1365.

This sequence belongs to the RNA polymerase beta' chain family. As to quaternary structure, component of the RNA polymerase I (Pol I) complex consisting of at least 13 subunits. Post-translationally, phosphorylated.

The protein resides in the nucleus. The protein localises to the nucleolus. It carries out the reaction RNA(n) + a ribonucleoside 5'-triphosphate = RNA(n+1) + diphosphate. Its function is as follows. DNA-dependent RNA polymerase catalyzes the transcription of DNA into RNA using the four ribonucleoside triphosphates as substrates. Largest and catalytic core component of RNA polymerase I which synthesizes ribosomal RNA precursors. Forms the polymerase active center together with the second largest subunit. A single stranded DNA template strand of the promoter is positioned within the central active site cleft of Pol I. A bridging helix emanates from RPA1 and crosses the cleft near the catalytic site and is thought to promote translocation of Pol I by acting as a ratchet that moves the RNA-DNA hybrid through the active site by switching from straight to bent conformations at each step of nucleotide addition. This is DNA-directed RNA polymerase I subunit RPA1 (RpI1) from Drosophila melanogaster (Fruit fly).